A 473-amino-acid polypeptide reads, in one-letter code: Nitrogenase vanadium-iron protein alpha chain (473 aa).

Residues Cys49, Cys74, and Cys137 each contribute to the [8Fe-7S] cluster site. [7Fe-V-9S-C-homocitryl] cluster is bound by residues Cys256 and His422.

Belongs to the NifD/NifK/NifE/NifN family. As to quaternary structure, hexamer of two alpha, two beta, and two delta chains. [8Fe-7S] cluster serves as cofactor. [7Fe-V-9S-C-homocitryl] cluster is required as a cofactor.

The enzyme catalyses N2 + 8 reduced [2Fe-2S]-[ferredoxin] + 16 ATP + 16 H2O = H2 + 8 oxidized [2Fe-2S]-[ferredoxin] + 2 NH4(+) + 16 ADP + 16 phosphate + 6 H(+). Functionally, this vanadium-iron protein is part of the nitrogenase complex that catalyzes the key enzymatic reactions in nitrogen fixation. This Azotobacter chroococcum mcd 1 protein is Nitrogenase vanadium-iron protein alpha chain (vnfD).